Consider the following 526-residue polypeptide: MVWVFKSQFEGLSALKRGVHALTKAVTPAFGPRGYNVVIKKGKAPIVLTKNGIRIAKEIILQDAFESLGVKLAKEALLKVVEQTGDGSTTALVVIDALFTQGLKGIAAGLDPQEIKAGILLSVEMVYQQLQRQAIELQSPKDVLHVAMVAANHDVTLGTVVATVISQADLKGVFSSKDSGISKTRGLGKRVKSGYLSPYFVTRPETMDVVWEEALVLILSHSLVSLSEELIRYLELISEQNTHPLVIIAEDFDQNVLRTLILNKLRNGLPVCAVKAPGSRELRQVVLEDLAILTGATLIGQESENCEIPVSLDVLGRVKQVMITKETFTFLEGGGDAEIIQARKQELCLAIAGSTSESECQELEERLAIFIGSIPQVQITADTDTEQRERQFQLESALRATKAAMKGGIVPGGGVAFLRAAHAIEVPANLSSGMTFGFETLLQAVRTPLKVLAQNCGRSSEEVIHTILSHENPRFGYNGMTDTFEDLVDAGICDPLIVTTSSLKCAVSVSCLLLTSSFFISSRTKT.

ATP-binding residues include Lys-50, Gly-413, and Asp-494.

It belongs to the chaperonin (HSP60) family. Forms a cylinder of 14 subunits composed of two heptameric rings stacked back-to-back. Interacts with the co-chaperonin GroES.

Its subcellular location is the cytoplasm. The catalysed reaction is ATP + H2O + a folded polypeptide = ADP + phosphate + an unfolded polypeptide.. Together with its co-chaperonin GroES, plays an essential role in assisting protein folding. The GroEL-GroES system forms a nano-cage that allows encapsulation of the non-native substrate proteins and provides a physical environment optimized to promote and accelerate protein folding. The sequence is that of Chaperonin GroEL 2 from Chlamydia pneumoniae (Chlamydophila pneumoniae).